A 65-amino-acid chain; its full sequence is Large ribosomal subunit protein bL33m (65 aa).

Residues 1–8 (MFLSAVFF) constitute a mitochondrion transit peptide.

It belongs to the bacterial ribosomal protein bL33 family. In terms of assembly, component of the mitochondrial large ribosomal subunit (mt-LSU). Mature mammalian 55S mitochondrial ribosomes consist of a small (28S) and a large (39S) subunit. The 28S small subunit contains a 12S ribosomal RNA (12S mt-rRNA) and 30 different proteins. The 39S large subunit contains a 16S rRNA (16S mt-rRNA), a copy of mitochondrial valine transfer RNA (mt-tRNA(Val)), which plays an integral structural role, and 52 different proteins.

It is found in the mitochondrion. The chain is Large ribosomal subunit protein bL33m (MRPL33) from Homo sapiens (Human).